We begin with the raw amino-acid sequence, 103 residues long: Co-chaperonin GroES (103 aa).

This sequence belongs to the GroES chaperonin family. Heptamer of 7 subunits arranged in a ring. Interacts with the chaperonin GroEL.

The protein resides in the cytoplasm. Functionally, together with the chaperonin GroEL, plays an essential role in assisting protein folding. The GroEL-GroES system forms a nano-cage that allows encapsulation of the non-native substrate proteins and provides a physical environment optimized to promote and accelerate protein folding. GroES binds to the apical surface of the GroEL ring, thereby capping the opening of the GroEL channel. The chain is Co-chaperonin GroES from Parasynechococcus marenigrum (strain WH8102).